The following is a 232-amino-acid chain: Ribosomal RNA small subunit methyltransferase G (232 aa).

The tract at residues 1–24 (MVDTALHPIPGRRTPPHPRSTLPL) is disordered. S-adenosyl-L-methionine contacts are provided by residues Gly91, Leu96, 142-143 (AE), and Arg160.

This sequence belongs to the methyltransferase superfamily. RNA methyltransferase RsmG family.

The protein localises to the cytoplasm. Functionally, specifically methylates the N7 position of guanine in position 518 of 16S rRNA. The chain is Ribosomal RNA small subunit methyltransferase G from Corynebacterium efficiens (strain DSM 44549 / YS-314 / AJ 12310 / JCM 11189 / NBRC 100395).